Here is a 409-residue protein sequence, read N- to C-terminus: Protein PHOSPHATE STARVATION RESPONSE 1 (409 aa).

Residues 1 to 15 (MEARPVHRSGSRDLT) show a composition bias toward basic and acidic residues. Disordered stretches follow at residues 1 to 42 (MEAR…NSQL), 86 to 108 (EKQQHYTGSSSNNAVQTPSNNDS), and 178 to 226 (ETNS…TGKA). 2 stretches are compositionally biased toward polar residues: residues 16–26 (RTSSIPSTQKP) and 90–108 (HYTGSSSNNAVQTPSNNDS). Positions 192–224 (QIPQPQIVQQQPSPSVELRPVSTTSSNSNNGTG) are enriched in low complexity. The region spanning 222 to 282 (GTGKARMRWT…HLQKYRTARY (61 aa)) is the HTH myb-type domain. Positions 253 to 278 (PKGVLKIMKVEGLTIYHVKSHLQKYR) form a DNA-binding region, H-T-H motif. Residues 314–334 (TEALRLQMEVQKQLHEQLEIQ) are a coiled coil. The short motif at 327 to 332 (LHEQLE) is the LHEQLE element. A compositionally biased stretch (polar residues) spans 358 to 370 (GLTKGTASTSDSA). Residues 358-409 (GLTKGTASTSDSAAKSEQEDKKTADSKEVPEEETRKCEELESPQPKRPKIDN) form a disordered region. Residues 371–396 (AKSEQEDKKTADSKEVPEEETRKCEE) are compositionally biased toward basic and acidic residues. Ser-399 carries the post-translational modification Phosphoserine.

It belongs to the MYB-CC family. In terms of assembly, homodimers and heterodimers. Interacts with SPX1 in a Pi-dependent manner. Does not interact with PHL2 or PHL3. In terms of processing, sumoylated by SIZ1. Sumoylation controls phosphate deficiency responses.

The protein localises to the nucleus. Transcription factor involved in phosphate starvation signaling. Binds as a dimer to P1BS, an imperfect palindromic sequence 5'-GNATATNC-3', to promote the expression of inorganic phosphate (Pi) starvation-responsive genes. SPX1 is a competitive inhibitor of this DNA-binding. PHR1 binding to its targets is low Pi-dependent. Regulates the expression of miR399. Regulates the expression of IPS1 (At3g09922), a non-coding RNA that mimics the target of miR399 to block the cleavage of PHO2 under Pi-deficient conditions. Regulates lipid remodeling and triacylglycerol accumulation during phosphorus starvation. Required for the shoot-specific hypoxic response. Regulates FER1 expression upon phosphate starvation, linking iron and phosphate homeostasis. Contributes to the homeostasis of both sulfate and phosphate in plants under phosphate deficiency. Required for adaptation to high light and retaining functional photosynthesis during phosphate starvation. Involved in the coregulation of Zn and Pi homeostasis. This is Protein PHOSPHATE STARVATION RESPONSE 1 from Arabidopsis thaliana (Mouse-ear cress).